The chain runs to 296 residues: Pantothenate synthetase (296 aa).

An ATP-binding site is contributed by 30 to 37; the sequence is MGNLHEGH. Catalysis depends on His37, which acts as the Proton donor. Gln61 provides a ligand contact to (R)-pantoate. Gln61 lines the beta-alanine pocket. 149-152 contributes to the ATP binding site; the sequence is GEKD. Gln155 provides a ligand contact to (R)-pantoate. ATP-binding positions include Val178 and 186-189; that span reads MSSR.

It belongs to the pantothenate synthetase family. As to quaternary structure, homodimer.

It localises to the cytoplasm. The enzyme catalyses (R)-pantoate + beta-alanine + ATP = (R)-pantothenate + AMP + diphosphate + H(+). It participates in cofactor biosynthesis; (R)-pantothenate biosynthesis; (R)-pantothenate from (R)-pantoate and beta-alanine: step 1/1. Its function is as follows. Catalyzes the condensation of pantoate with beta-alanine in an ATP-dependent reaction via a pantoyl-adenylate intermediate. In Vibrio atlanticus (strain LGP32) (Vibrio splendidus (strain Mel32)), this protein is Pantothenate synthetase.